An 867-amino-acid chain; its full sequence is Protein translocase subunit SecA (867 aa).

ATP is bound by residues Q85, 103–107 (GEGKT), and D491.

The protein belongs to the SecA family. In terms of assembly, monomer and homodimer. Part of the essential Sec protein translocation apparatus which comprises SecA, SecYEG and auxiliary proteins SecDF. Other proteins may also be involved.

The protein localises to the cell membrane. The protein resides in the cytoplasm. The catalysed reaction is ATP + H2O + cellular proteinSide 1 = ADP + phosphate + cellular proteinSide 2.. In terms of biological role, part of the Sec protein translocase complex. Interacts with the SecYEG preprotein conducting channel. Has a central role in coupling the hydrolysis of ATP to the transfer of proteins into and across the cell membrane, serving as an ATP-driven molecular motor driving the stepwise translocation of polypeptide chains across the membrane. In Mycoplasmopsis pulmonis (strain UAB CTIP) (Mycoplasma pulmonis), this protein is Protein translocase subunit SecA.